The primary structure comprises 523 residues: Asparagine--tRNA ligase (523 aa).

Residues 329 to 350 (SARGDTPLAARSTARTPPVRTP) form a disordered region.

The protein belongs to the class-II aminoacyl-tRNA synthetase family. As to quaternary structure, homodimer.

The protein localises to the cytoplasm. The enzyme catalyses tRNA(Asn) + L-asparagine + ATP = L-asparaginyl-tRNA(Asn) + AMP + diphosphate + H(+). In Treponema pallidum (strain Nichols), this protein is Asparagine--tRNA ligase.